The sequence spans 926 residues: Neurofilament medium polypeptide (926 aa).

Residues Met1–Asn10 are compositionally biased toward polar residues. Disordered stretches follow at residues Met1–Ser51 and Gln79–Lys102. N-acetylserine is present on Ser2. The interval Ser2 to Gln104 is head. Over residues Arg21–Ser44 the composition is skewed to low complexity. At Ser30 the chain carries Phosphoserine. Position 42 is an omega-N-methylarginine (Arg42). Residue Thr47 is glycosylated (O-linked (GlcNAc) threonine). Ser99 carries the post-translational modification Phosphoserine. An IF rod domain is found at Glu101–Phe412. Residues Ile105–Leu136 are coil 1A. The interval Arg137–Ala149 is linker 1. Residues Tyr150 to Gln248 form a coil 1B region. Ser226 is modified (phosphoserine). A linker 12 region spans residues Ile249–Asp265. The interval Ile266–Gln287 is coil 2A. The linker 2 stretch occupies residues Ala288–Trp291. A coil 2B region spans residues Phe292–Phe412. Phosphotyrosine is present on Tyr320. A phosphoserine mark is found at Ser346, Ser418, Ser430, Ser468, and Ser484. Residues Ser413–Asp926 form a tail region. Residues Glu487–Glu860 form a disordered region. A compositionally biased stretch (acidic residues) spans Lys490–Val507. Copy 1 of the repeat occupies Lys512–Lys516. The 17 X 5 AA approximate tandem repeats of K-S-P-[TVEA]-[AKETP] stretch occupies residues Lys512–Glu698. Ser513 bears the Phosphoserine mark. Residues Lys523–Glu543 show a composition bias toward acidic residues. The span at Ala544 to Lys563 shows a compositional bias: basic and acidic residues. Phosphoserine occurs at positions 547, 555, 560, and 561. Acidic residues predominate over residues Glu564–Ala584. Phosphothreonine is present on Thr574. Positions Ala585–Lys619 are enriched in basic and acidic residues. 16 consecutive repeat copies span residues Lys619–Ala623, Lys624–Thr628, Lys629–Ala633, Lys634–Ala638, Lys639–Ala643, Lys644–Ala648, Lys649–Ala653, Lys654–Ala658, Lys659–Ala663, Lys664–Ala668, Lys669–Ala673, Lys674–Ala678, Lys679–Ala683, Lys684–Ala688, Lys689–Pro693, and Lys694–Glu698. Thr628 is subject to Phosphothreonine. A phosphoserine mark is found at Ser630, Ser635, and Ser640. Thr647 is modified (phosphothreonine). 2 positions are modified to phosphoserine: Ser650 and Ser655. Phosphoserine occurs at positions 665 and 670. Over residues Ala673 to Ala692 the composition is skewed to low complexity. Thr677 bears the Phosphothreonine mark. Ser680, Ser685, Ser690, Ser695, Ser727, Ser751, Ser757, Ser771, Ser831, and Ser847 each carry phosphoserine. Basic and acidic residues-rich tracts occupy residues Pro696–Pro764, Ser771–Ile811, and Thr826–Gly838. Residues Gly849–Glu860 show a composition bias toward basic and acidic residues.

In terms of assembly, forms heterodimers with NEFL; which can further hetero-oligomerize (in vitro). Forms heterodimers with INA (in vitro). Post-translationally, phosphorylated on a number of serine residues in the repeated K-S-P tripeptide motif. Phosphorylation of NFH may result in the formation of interfilament cross-links that are important in the maintenance of axonal caliber. Phosphorylation seems to play a major role in the functioning of the larger neurofilament polypeptides (NF-M and NF-H), the levels of phosphorylation being altered developmentally and coincidentally with a change in the neurofilament function. In terms of processing, phosphorylated in the head and rod regions by the PKC kinase PKN1, leading to the inhibition of polymerization.

The protein resides in the cytoplasm. It localises to the cytoskeleton. It is found in the cell projection. The protein localises to the axon. Its function is as follows. Neurofilaments usually contain three intermediate filament proteins: NEFL, NEFM, and NEFH which are involved in the maintenance of neuronal caliber. May additionally cooperate with the neuronal intermediate filament proteins PRPH and INA to form neuronal filamentous networks. This Bos taurus (Bovine) protein is Neurofilament medium polypeptide (NEFM).